The chain runs to 1007 residues: Glutamate receptor ionotropic, delta-2 (1007 aa).

The N-terminal stretch at 1-23 (MEVFPLLFFLSFWWSRTWDLATS) is a signal peptide. The tract at residues 24–345 (DSIIHIGAIF…NAFHKKLEDR (322 aa)) is interaction with CBLN1 homotrimer. Topologically, residues 24–566 (DSIIHIGAIF…DMFACLAPFD (543 aa)) are extracellular. 3 disulfide bridges follow: Cys-83–Cys-355, Cys-99–Cys-131, and Cys-298–Cys-310. N-linked (GlcNAc...) asparagine glycosylation is present at Asn-293. N-linked (GlcNAc...) asparagine glycosylation occurs at Asn-426. Residues 567–587 (LSLWACIAGTVLLVGLLVYLL) form a helical membrane-spanning segment. At 588 to 635 (NWLNPPRLQMGSMTSTTLYNSMWFVYGSFVQQGGEVPYTTLATRMMMG) the chain is on the cytoplasmic side. A helical transmembrane segment spans residues 636–656 (AWWLFALIVISSYTANLAAFL). Residues 657 to 830 (TITRIESSIQ…QKGGALDIKS (174 aa)) lie on the Extracellular side of the membrane. N-linked (GlcNAc...) asparagine glycosylation is found at Asn-713 and Asn-716. Residues 831 to 851 (LAGVFCILAAGIVLSCLIAVL) traverse the membrane as a helical segment. Residues 852 to 1007 (ETWWSRRKGS…GNDPDRGTSI (156 aa)) are Cytoplasmic-facing. At Ser-883 the chain carries Phosphoserine. Position 886 is a phosphothreonine (Thr-886). Position 890 is a phosphoserine (Ser-890). The interval 921-991 (DFRNTHITTT…MSSIPYQPTP (71 aa)) is interaction with AP4M1. A PDZ-binding motif is present at residues 1005–1007 (TSI). Position 1006 is a phosphoserine (Ser-1006).

It belongs to the glutamate-gated ion channel (TC 1.A.10.1) family. GRID2 subfamily. As to quaternary structure, tetramer; dimer of dimers. Interacts with AP4M1. Interacts with EML2. Interacts with MAGI2 (via PDZ domains). Interacts with BECN1, GOPC, GRID2IP, SHANK1 and SHANK2. Interacts with CBLN2, but not with CBLN4. Interacts with CBLN1 (via C1q domain); the interaction is CBLN1-NRX1 complex formation-dependent; CBLN1-binding is calcium-independent; CBLN1 hexamers anchor GRID2 N-terminal domain dimers to monomeric NRXN1 isoform beta; promotes synaptogenesis and mediates the D-Serine-dependent long term depression signals and AMPA receptor endocytosis. Expressed at high levels in the cerebellar Purkinje cell layer, almost absent in the forebrain.

It localises to the postsynaptic cell membrane. It catalyses the reaction Ca(2+)(in) = Ca(2+)(out). The catalysed reaction is Na(+)(in) = Na(+)(out). Member of the ionotropic glutamate receptor family, which plays a crucial role in synaptic organization and signal transduction in the central nervous system. Although it shares structural features with ionotropic glutamate receptors, does not bind glutamate as a primary ligand. Promotes synaptogenesis and mediates the D-Serine-dependent long term depression signals and AMPA receptor endocytosis of cerebellar parallel fiber-Purkinje cell (PF-PC) synapses through the NRX1B-CBLN1-GRID2 triad complex. In the presence of neurexins and cerebellins, forms cation-selective channels that are proposed to be gated by glycine and D-serine. However, recent research disputes this ligand-gated cation channel activity. Cation-selective ion channel activity can be triggered by GRM1 in Purkinje cells. This Rattus norvegicus (Rat) protein is Glutamate receptor ionotropic, delta-2 (Grid2).